The primary structure comprises 338 residues: 1-aminocyclopropane-1-carboxylate deaminase (338 aa).

Lys-51 is modified (N6-(pyridoxal phosphate)lysine). The active-site Nucleophile is Ser-78.

It belongs to the ACC deaminase/D-cysteine desulfhydrase family. As to quaternary structure, homotrimer. The cofactor is pyridoxal 5'-phosphate.

It catalyses the reaction 1-aminocyclopropane-1-carboxylate + H2O = 2-oxobutanoate + NH4(+). Functionally, catalyzes a cyclopropane ring-opening reaction, the irreversible conversion of 1-aminocyclopropane-1-carboxylate (ACC) to ammonia and alpha-ketobutyrate. Allows growth on ACC as a nitrogen source. This Burkholderia thailandensis (strain ATCC 700388 / DSM 13276 / CCUG 48851 / CIP 106301 / E264) protein is 1-aminocyclopropane-1-carboxylate deaminase.